A 222-amino-acid chain; its full sequence is Chorionic somatomammotropin hormone-like 1 (222 aa).

The first 26 residues, 1 to 26 (MAAGSRTSLLLAFALLCLPWLQEAGA), serve as a signal peptide directing secretion. 2 residues coordinate Zn(2+): histidine 44 and glutamate 205. Cysteine 213 and cysteine 220 form a disulfide bridge.

The protein belongs to the somatotropin/prolactin family.

It localises to the secreted. Its function is as follows. May be a novel gestational hormone required to compensate for absence of other members of the GH/CS cluster during gestation. This Homo sapiens (Human) protein is Chorionic somatomammotropin hormone-like 1 (CSHL1).